The sequence spans 481 residues: ATP synthase subunit beta (481 aa).

160–167 serves as a coordination point for ATP; it reads GGAGVGKT.

Belongs to the ATPase alpha/beta chains family. In terms of assembly, F-type ATPases have 2 components, CF(1) - the catalytic core - and CF(0) - the membrane proton channel. CF(1) has five subunits: alpha(3), beta(3), gamma(1), delta(1), epsilon(1). CF(0) has three main subunits: a(1), b(2) and c(9-12). The alpha and beta chains form an alternating ring which encloses part of the gamma chain. CF(1) is attached to CF(0) by a central stalk formed by the gamma and epsilon chains, while a peripheral stalk is formed by the delta and b chains.

It is found in the cell inner membrane. It catalyses the reaction ATP + H2O + 4 H(+)(in) = ADP + phosphate + 5 H(+)(out). Produces ATP from ADP in the presence of a proton gradient across the membrane. The catalytic sites are hosted primarily by the beta subunits. This is ATP synthase subunit beta from Anaeromyxobacter sp. (strain Fw109-5).